The following is a 5098-amino-acid chain: Auxin transport protein BIG (5098 aa).

A2 is modified (N-acetylalanine). The next 2 membrane-spanning stretches (helical) occupy residues 1150-1170 (AILL…NGLL) and 1458-1478 (LAAE…IGTL). Over residues 1539-1549 (SVDEDEDDGTS) the composition is skewed to acidic residues. The tract at residues 1539-1562 (SVDEDEDDGTSDGEVASLDKEDEE) is disordered. The UBR-type zinc-finger motif lies at 1573-1644 (KVCTFTSSGS…RGSSCQCLKP (72 aa)). The segment at 2613-2672 (SVQYCCDGCSTVPILRRRWHCTVCPDFDLCEACYEVLDADRLPPPHTRDHPMTAIPIEVE) adopts a ZZ-type zinc-finger fold. Zn(2+)-binding residues include C2618, C2621, C2633, C2636, C2642, C2645, H2658, and H2662. A helical membrane pass occupies residues 2813–2833 (SSLGEIVILVFMFFTLMLRSW). The tract at residues 3149 to 3174 (EVVTGSNRSGSQSVDSKKKKKGEDGH) is disordered. Over residues 3151–3162 (VTGSNRSGSQSV) the composition is skewed to polar residues. The MYND-type; degenerate zinc finger occupies 3464–3504 (CPRCSRPVTDKHGICSNCHENAYQCRQCRNINYENLDSFLC). 2 coiled-coil regions span residues 3537-3557 (KKGL…YQQL) and 4313-4333 (LEIL…NQEE). The UBR4 E3 catalytic module stretch occupies residues 4569–5098 (PSVPLILSML…QFVRSAIDKD (530 aa)). The HemiRING-type zinc finger occupies 4698–4817 (GLACMVCREG…WDNLNALGRA (120 aa)). The Zn(2+) site is built by C4701, C4704, H4751, and C4754. A UZI domain is found at 4820-5098 (SRLRLLTYDI…QFVRSAIDKD (279 aa)). The span at 4891 to 4903 (SSTSTATAPSSDS) shows a compositional bias: low complexity. The disordered stretch occupies residues 4891-4915 (SSTSTATAPSSDSRPLTPGSQLSST).

It belongs to the UBR4 family. Constitutively expressed in roots, rosette leaves, inflorescence stems, and flowers. Present in inflorescence meristems, floral meristems and vascular tissues.

The protein resides in the membrane. Its function is as follows. Required for auxin efflux and polar auxin transport (PAT) influencing auxin-mediated developmental responses (e.g. cell elongation, apical dominance, lateral root production, inflorescence architecture, general growth and development). Controls the elongation of the pedicels and stem internodes through auxin action. Involved in the expression modulation of light-regulated genes. Represses CAB1 and CAB3 genes expression in etiolated seedlings. Confers sensitivity to the auxin transport inhibitors N-1-naphthylphthalamic acid (NPA), 2-carboxyphenyl-3-phenylpropane-l,2-dione (CPD), and methyl-2-chloro-9-hydroxyfluorene-9-carboxylate (CFM). Influences the polarized subcellular distribution of the auxin transporter PIN1 in response to auxin transport inhibitors. Plays a role in the regulation of responses to phytohormones such as auxin, cytokinins, ethylene and gibberellic acid (GA), particularly during light-mediated stimuli (e.g. shade ovoidance, etiolation). Required for pericycle cell activation to form lateral root primordia (LRP) in both high and low phosphate P conditions. Necessary for the plant-growth promotion and lateral root development mediated by the fungus Trichoderma virens. The protein is Auxin transport protein BIG (BIG) of Arabidopsis thaliana (Mouse-ear cress).